The following is a 119-amino-acid chain: Ribonuclease P protein component (119 aa).

This sequence belongs to the RnpA family. Consists of a catalytic RNA component (M1 or rnpB) and a protein subunit.

The enzyme catalyses Endonucleolytic cleavage of RNA, removing 5'-extranucleotides from tRNA precursor.. Functionally, RNaseP catalyzes the removal of the 5'-leader sequence from pre-tRNA to produce the mature 5'-terminus. It can also cleave other RNA substrates such as 4.5S RNA. The protein component plays an auxiliary but essential role in vivo by binding to the 5'-leader sequence and broadening the substrate specificity of the ribozyme. In Haemophilus influenzae (strain 86-028NP), this protein is Ribonuclease P protein component.